The primary structure comprises 142 residues: Large ribosomal subunit protein uL13 (142 aa).

It belongs to the universal ribosomal protein uL13 family. In terms of assembly, part of the 50S ribosomal subunit.

Functionally, this protein is one of the early assembly proteins of the 50S ribosomal subunit, although it is not seen to bind rRNA by itself. It is important during the early stages of 50S assembly. This Stutzerimonas stutzeri (strain A1501) (Pseudomonas stutzeri) protein is Large ribosomal subunit protein uL13.